We begin with the raw amino-acid sequence, 442 residues long: MSCKININEIDPSVLSKLKSKAVLKIDNNGKPDNVILTRLINETAYIPFSMAKNFNLSIPLRNKFPAISTKFKGELRDNQMIVRREAIDILEKNHSVIISCFTGFGKTIGAINLACKLRLKTLIIVTRVVLMNQWKESILKFCESENKTIPIVEIISSNSKDEYVMCNFAIINAINIPKMEQGFLESFGTVIVDEVHLVMARKTFRSLLYVTPRYLIALSATSYRSDGLDALFPIFFGKEKIIRELNRKHVIYRVDTLFKPQVKYGINGKMDWNALLEDQASNENRNKLIVQVVKNNPERTFLILVKRIKQGEWLAKEIEKECFNRVDHLLNNLSIDDEQKEPKHVATLFGSNQKFDKNCKVLIGTSAKIGTGFDFDKLDTLLLAADVVEYYIQFIGRIMRKDDVNPIIFDLVDNNKTLQKHYSERLKVYKKHGGIVKNYKL.

In terms of domain architecture, Helicase ATP-binding spans 88–241; that stretch reads IDILEKNHSV…LFPIFFGKEK (154 aa). ATP is bound at residue 101–108; that stretch reads CFTGFGKT. The short motif at 194–197 is the DEAH box element; that stretch reads DEVH.

This sequence belongs to the DEAD box helicase family. DEAH subfamily.

This is Putative helicase 161L from Invertebrate iridescent virus 6 (IIV-6).